Here is a 365-residue protein sequence, read N- to C-terminus: tRNA 2-selenouridine synthase (365 aa).

Positions 12–136 (FLDDVPMMDM…LRTFLLDTTQ (125 aa)) constitute a Rhodanese domain. The active-site S-selanylcysteine intermediate is the Cys95.

This sequence belongs to the SelU family. As to quaternary structure, monomer.

The enzyme catalyses 5-methylaminomethyl-2-thiouridine(34) in tRNA + selenophosphate + (2E)-geranyl diphosphate + H2O + H(+) = 5-methylaminomethyl-2-selenouridine(34) in tRNA + (2E)-thiogeraniol + phosphate + diphosphate. It catalyses the reaction 5-methylaminomethyl-2-thiouridine(34) in tRNA + (2E)-geranyl diphosphate = 5-methylaminomethyl-S-(2E)-geranyl-thiouridine(34) in tRNA + diphosphate. The catalysed reaction is 5-methylaminomethyl-S-(2E)-geranyl-thiouridine(34) in tRNA + selenophosphate + H(+) = 5-methylaminomethyl-2-(Se-phospho)selenouridine(34) in tRNA + (2E)-thiogeraniol. It carries out the reaction 5-methylaminomethyl-2-(Se-phospho)selenouridine(34) in tRNA + H2O = 5-methylaminomethyl-2-selenouridine(34) in tRNA + phosphate. Its function is as follows. Involved in the post-transcriptional modification of the uridine at the wobble position (U34) of tRNA(Lys), tRNA(Glu) and tRNA(Gln). Catalyzes the conversion of 2-thiouridine (S2U-RNA) to 2-selenouridine (Se2U-RNA). Acts in a two-step process involving geranylation of 2-thiouridine (S2U) to S-geranyl-2-thiouridine (geS2U) and subsequent selenation of the latter derivative to 2-selenouridine (Se2U) in the tRNA chain. This chain is tRNA 2-selenouridine synthase, found in Pseudomonas putida (strain W619).